A 336-amino-acid chain; its full sequence is D-alanine--D-alanine ligase (336 aa).

The ATP-grasp domain maps to Lys-124 to Asn-330. Ala-154–Glu-209 lines the ATP pocket. Positions 284, 297, and 299 each coordinate Mg(2+).

Belongs to the D-alanine--D-alanine ligase family. The cofactor is Mg(2+). Mn(2+) is required as a cofactor.

It localises to the cytoplasm. It catalyses the reaction 2 D-alanine + ATP = D-alanyl-D-alanine + ADP + phosphate + H(+). It participates in cell wall biogenesis; peptidoglycan biosynthesis. Its function is as follows. Cell wall formation. The chain is D-alanine--D-alanine ligase from Shewanella sp. (strain MR-4).